The chain runs to 214 residues: Pyrrolidone-carboxylate peptidase 2 (214 aa).

Catalysis depends on residues Glu-78, Cys-141, and His-165.

The protein belongs to the peptidase C15 family. Homotetramer.

It is found in the cytoplasm. It carries out the reaction Release of an N-terminal pyroglutamyl group from a polypeptide, the second amino acid generally not being Pro.. In terms of biological role, removes 5-oxoproline from various penultimate amino acid residues except L-proline. The sequence is that of Pyrrolidone-carboxylate peptidase 2 from Streptococcus pneumoniae serotype 4 (strain ATCC BAA-334 / TIGR4).